The following is a 427-amino-acid chain: Glutamate-1-semialdehyde 2,1-aminomutase 1 (427 aa).

Lys267 carries the post-translational modification N6-(pyridoxal phosphate)lysine.

It belongs to the class-III pyridoxal-phosphate-dependent aminotransferase family. HemL subfamily. Homodimer. It depends on pyridoxal 5'-phosphate as a cofactor.

Its subcellular location is the cytoplasm. It catalyses the reaction (S)-4-amino-5-oxopentanoate = 5-aminolevulinate. The protein operates within porphyrin-containing compound metabolism; protoporphyrin-IX biosynthesis; 5-aminolevulinate from L-glutamyl-tRNA(Glu): step 2/2. The sequence is that of Glutamate-1-semialdehyde 2,1-aminomutase 1 from Staphylococcus epidermidis (strain ATCC 35984 / DSM 28319 / BCRC 17069 / CCUG 31568 / BM 3577 / RP62A).